A 201-amino-acid polypeptide reads, in one-letter code: Natural cytotoxicity triggering receptor 3 (201 aa).

A signal peptide spans 1–18; that stretch reads MAWMLLLILIMVYPGSCA. Residues 19-126 form the Ig-like domain; the sequence is LWVSQPPEIR…VGTGNGTRLV (108 aa). The Extracellular portion of the chain corresponds to 19-133; that stretch reads LWVSQPPEIR…RLVVEKEYPQ (115 aa). A disulfide bond links Cys-39 and Cys-108. N-linked (GlcNAc...) asparagine glycans are attached at residues Asn-42 and Asn-121. Residues 134 to 154 traverse the membrane as a helical segment; the sequence is LGAGTVLLLRAGFYAVSFLSV. The Cytoplasmic portion of the chain corresponds to 155 to 201; it reads AMGSTLYYQGKCLTWKGPRRQLPAVVPGPLPPPCGSSAHLLPPVPGG.

Belongs to the natural cytotoxicity receptor (NCR) family. As to quaternary structure, homodimer in the unliganted form. Interacts with CD3Z. Interacts with and is activated by binding to NCR3LG1. Interacts with and is activated by binding to BAG6. Interacts with and is inhibited by binding to LGALS3.

It is found in the cell membrane. In terms of biological role, cell membrane receptor of natural killer/NK cells that is activated by binding of extracellular ligands including BAG6 and NCR3LG1. Stimulates NK cells cytotoxicity toward neighboring cells producing these ligands. It controls, for instance, NK cells cytotoxicity against tumor cells. Engagement of NCR3 by BAG6 also promotes myeloid dendritic cells (DC) maturation, both through killing DCs that did not acquire a mature phenotype, and inducing the release by NK cells of TNFA and IFNG that promote DC maturation. This is Natural cytotoxicity triggering receptor 3 (NCR3) from Macaca mulatta (Rhesus macaque).